The following is a 629-amino-acid chain: (-)-alpha-pinene synthase, chloroplastic (629 aa).

Residues 1–48 (MSPVSVISLPSDLCLPTSFIDRSGRELIPLHITIPNVAMRRQGKLMTR) constitute a chloroplast transit peptide. Positions 380, 384, and 532 each coordinate Mg(2+). The short motif at 380–384 (DDMYD) is the DDXXD motif element. Ser540 serves as a coordination point for K(+).

The protein belongs to the terpene synthase family. Tpsd subfamily. It depends on Mg(2+) as a cofactor. Requires Mn(2+) as cofactor. K(+) is required as a cofactor.

It is found in the plastid. The protein localises to the chloroplast. The catalysed reaction is (2E)-geranyl diphosphate = (1S,5S)-alpha-pinene + diphosphate. It participates in terpene metabolism; oleoresin biosynthesis. Its function is as follows. Involved in defensive oleoresin formation in conifers in response to insect attack or other injury. Involved in monoterpene (C10) olefins biosynthesis. Produces mainly (-)-alpha-pinene (79%) and lesser amounts of (-)-beta-pinene (4.2%), nearly racemic mixtures of camphene (2.8% (+)/2.2% (-)) and limonene (2.4% (+)/3.7% (-)), as well as small amounts of (+)-alpha-pinene (3.3%) and (+)-beta-pinene (2.4%). This chain is (-)-alpha-pinene synthase, chloroplastic (PT1), found in Pinus taeda (Loblolly pine).